The primary structure comprises 470 residues: MANTPSQQDQFANKAQAWSARFSEPVSDLVKRYTASVDFDKRLARHDIRGSLAHADMLAAQGIISAQDLADIERGMQQILSEIDAGSFQWLLDLEDVHLNIEKRLVELVGDAGKRLHTGRSRNDQVATDIRLWLRDEIDLLIDLLRQLRHALATVALDNAGTIMPGFTHLQVAQPVTFGHHLLAYAEMFGRDAERLADCRKRVNRLPLGAAALAGTSYPIDRERVASTLGFDGVCRNSLDAVSDRDFAIEFCAAASLIMTHVSRLSEELVLWMSPRVGFIDLADRFCTGSSIMPQKKNPDVPELARGKTGRVNGHLVALLTLMKGQPLAYNKDNQEDKEGLFDTADTLRDTLTIFADMAGGIKVKADNMRAAALQGFATATDLADYLVKRGLPFRDAHEVVAHAVRDCEQRGCDLADLSLAELQAYHPSIEADIHQVLTLEGSVAARKHTGGTAPERVREEAQRVIQETA.

Belongs to the lyase 1 family. Argininosuccinate lyase subfamily.

It is found in the cytoplasm. The catalysed reaction is 2-(N(omega)-L-arginino)succinate = fumarate + L-arginine. Its pathway is amino-acid biosynthesis; L-arginine biosynthesis; L-arginine from L-ornithine and carbamoyl phosphate: step 3/3. The protein is Argininosuccinate lyase of Bordetella avium (strain 197N).